Here is a 60-residue protein sequence, read N- to C-terminus: Protein translocase subunit SecE (60 aa).

A helical transmembrane segment spans residues 37-57 (LLGFALVGGIGYLIHLGYIIL).

This sequence belongs to the SecE/SEC61-gamma family. As to quaternary structure, component of the Sec protein translocase complex. Heterotrimer consisting of SecY (alpha), SecG (beta) and SecE (gamma) subunits. The heterotrimers can form oligomers, although 1 heterotrimer is thought to be able to translocate proteins. Interacts with the ribosome. May interact with SecDF, and other proteins may be involved.

It is found in the cell membrane. Its function is as follows. Essential subunit of the Sec protein translocation channel SecYEG. Clamps together the 2 halves of SecY. May contact the channel plug during translocation. This Aeropyrum pernix (strain ATCC 700893 / DSM 11879 / JCM 9820 / NBRC 100138 / K1) protein is Protein translocase subunit SecE.